Here is a 241-residue protein sequence, read N- to C-terminus: Large ribosomal subunit protein uL30 (241 aa).

Residues 1-25 are disordered; that stretch reads MASTLKPETLVKKSKAQQKTAEERA.

The protein belongs to the universal ribosomal protein uL30 family.

The sequence is that of Large ribosomal subunit protein uL30 (RPL7) from Debaryomyces hansenii (strain ATCC 36239 / CBS 767 / BCRC 21394 / JCM 1990 / NBRC 0083 / IGC 2968) (Yeast).